Reading from the N-terminus, the 430-residue chain is Pyrokinin-1 receptor (430 aa).

The Extracellular portion of the chain corresponds to 1-16; it reads MSAGNMSHDLGPPRDP. A glycan (N-linked (GlcNAc...) asparagine) is linked at N5. A helical transmembrane segment spans residues 17–37; sequence LAIVIPVTVVYSLIFITGVVG. Residues 38 to 53 lie on the Cytoplasmic side of the membrane; it reads NISTCIVIKKNRSMHT. Residues 54–74 traverse the membrane as a helical segment; it reads ATNYYLFSLAISDFLLLLSGV. At 75-96 the chain is on the extracellular side; the sequence is PQEVSYIWSKYPYVFGEYICIG. Residues C94 and C171 are joined by a disulfide bond. The helical transmembrane segment at 97–117 threads the bilayer; that stretch reads RGLLAETSANATVLTITAFTV. The Cytoplasmic segment spans residues 118-140; sequence ERYIAICHPFLGQAMSKLSRAIR. Residues 141–161 form a helical membrane-spanning segment; the sequence is IIVLVWIMAIVTAIPQAAQFG. The Extracellular portion of the chain corresponds to 162-185; it reads IEHYSGVEQCGIVRVIVKHSFQLS. A helical membrane pass occupies residues 186-206; it reads TFIFFLAPMSIILVLYLLIGV. The Cytoplasmic segment spans residues 207–281; the sequence is HLYRSTLVEG…GRLNHYGTRR (75 aa). Residues 282-302 form a helical membrane-spanning segment; that stretch reads VLRMLVAVVVCFFLCWAPFHA. At 303-321 the chain is on the extracellular side; that stretch reads QRLIAIYAPARGAKLRDQH. Residues 322 to 342 form a helical membrane-spanning segment; the sequence is EFVYTVMTYVSGVLYYLSTCI. Residues 343 to 430 lie on the Cytoplasmic side of the membrane; that stretch reads NPLLYNIMSH…QYAMIGVQVN (88 aa). The span at 388-397 shows a compositional bias: polar residues; it reads TNSSQTQRFS. The interval 388–413 is disordered; it reads TNSSQTQRFSIESAEQPKPSIMQNPT.

Belongs to the G-protein coupled receptor 1 family.

It is found in the cell membrane. In terms of biological role, receptor for the neuropeptide CAP-3/pyrokinin-1 (TGPSASSGLWFGPRL-amide). Also activated weakly by other neuropeptides terminating in the sequence PRL-amide including pyrokinin-2, Hug-gamma, and ecdysis-triggering-hormone-1. The activity of this receptor is mediated by G proteins which activate a phosphatidyl-inositol-calcium second messenger system. This is Pyrokinin-1 receptor from Drosophila melanogaster (Fruit fly).